The sequence spans 166 residues: Cofilin-2 (166 aa).

Ala2 is subject to N-acetylalanine. Ser3 carries the post-translational modification Phosphoserine. Residues 4 to 153 (GVTVNDEVIK…KDRSTLGEKL (150 aa)) enclose the ADF-H domain. Thr6 carries the post-translational modification Phosphothreonine. A Nuclear localization signal motif is present at residues 30–34 (KKRKK).

This sequence belongs to the actin-binding proteins ADF family. In terms of assembly, interacts with CSRP3; possibly two molecules of CFL2 can interact with one molecule if CSRP3. The phosphorylation of Ser-24 may prevent recognition of the nuclear localization signal. Predominantly expressed in skeletal muscle.

The protein localises to the nucleus matrix. It is found in the cytoplasm. The protein resides in the cytoskeleton. Controls reversibly actin polymerization and depolymerization in a pH-sensitive manner. It has the ability to bind G- and F-actin in a 1:1 ratio of cofilin to actin. It is the major component of intranuclear and cytoplasmic actin rods. Required for muscle maintenance. May play a role during the exchange of alpha-actin forms during the early postnatal remodeling of the sarcomere. This Mus musculus (Mouse) protein is Cofilin-2 (Cfl2).